Consider the following 598-residue polypeptide: Pescadillo homolog (598 aa).

Residues 296-317 (QAMKADSKDKDDNSNDEAPENV) are disordered. In terms of domain architecture, BRCT spans 345–439 (PTATLFEDFV…ELLSANLYLP (95 aa)). Disordered stretches follow at residues 452–501 (DALG…EDVE), 515–544 (GIAYSKAKDEGLHDDVASKKKRKVTDEDEE), and 564–598 (MKYSNQQKEDKIEELKKKKKQLAKKEKTLKKVEKK). Residues 463-485 (ESEDESSDSSEESDSEIENEEED) are compositionally biased toward acidic residues. 3 stretches are compositionally biased toward basic and acidic residues: residues 520–532 (KAKDEGLHDDVAS), 570–579 (QKEDKIEELK), and 586–598 (AKKEKTLKKVEKK). Residues 557-598 (QRKLYKKMKYSNQQKEDKIEELKKKKKQLAKKEKTLKKVEKK) are a coiled coil.

It belongs to the pescadillo family. As to quaternary structure, component of the NOP7 complex, composed of ERB1, NOP7 and YTM1. The complex is held together by ERB1, which interacts with NOP7 via its N-terminal domain and with YTM1 via a high-affinity interaction between the seven-bladed beta-propeller domains of the 2 proteins. The NOP7 complex associates with the 66S pre-ribosome.

The protein localises to the nucleus. It localises to the nucleolus. The protein resides in the nucleoplasm. Component of the NOP7 complex, which is required for maturation of the 25S and 5.8S ribosomal RNAs and formation of the 60S ribosome. In Candida glabrata (strain ATCC 2001 / BCRC 20586 / JCM 3761 / NBRC 0622 / NRRL Y-65 / CBS 138) (Yeast), this protein is Pescadillo homolog.